Consider the following 60-residue polypeptide: MEKHNNPGSFTINNNIHDALNSIDTIVKNNNNNNNNNNNNNNNNNNNNNKFFICGCKNQK.

A disordered region spans residues 27–50 (VKNNNNNNNNNNNNNNNNNNNNNK). Positions 29–49 (NNNNNNNNNNNNNNNNNNNNN) are enriched in low complexity.

This is an uncharacterized protein from Dictyostelium discoideum (Social amoeba).